Here is a 692-residue protein sequence, read N- to C-terminus: MGTVSSRRSWWPLPLPLLLLLLLGPAGARAQEDEDGDYEELVLALRSEEDGLADAPEHGATATFHRCAKDPWRLPGTYVVVLKEETHRSQSERTARRLQAQAARRGYLTKILHVFHHLLPGFLVKMSGDLLELALKLPHVDYIEEDSSVFAQSIPWNLERITPARYRADEYQPPKGGSLVEVYLLDTSIQSDHREIEGRVMVTDFESVPEEDGTRFHRQASKCDSHGTHLAGVVSGRDAGVAKGAGLRSLRVLNCQGKGTVSGTLIGLEFIRKSQLVQPVGPLVVLLPLAGGYSRVFNAACQRLARAGVVLVTAAGNFRDDACLYSPASAPEVITVGATNAQDQPVTLGTLGTNFGRCVDLFAPGEDIIGASSDCSTCFVSRSGTSQAAAHVAGIAAMMLSAEPELTLAELRQRLIHFSAKDVINEAWFPEDQRVLTPNLVAALPPSTHRAGWQLFCRTVWSAHSGPTRMATAVARCAQDEELLSCSSFSRSGKRRGERIEAQGGKRVCRAHNAFGGEGVYAIARCCLLPQVNCSVHTAPPAGASMGTRVHCHQQGHVLTGCSSHWEVEDLGTHKPPVLRPRGQPNQCVGHREASIHASCCHAPGLECKVKEHGIPAPQEQVIVACEDGWTLTGCSPLPGTSHVLGAYAVDNTCVVRSRDVSTTGSTSKEAVAAVAICCRSRHLVQASQELQ.

The N-terminal stretch at 1–30 (MGTVSSRRSWWPLPLPLLLLLLLGPAGARA) is a signal peptide. A propeptide spanning residues 31–152 (QEDEDGDYEE…IEEDSSVFAQ (122 aa)) is cleaved from the precursor. The residue at position 38 (tyrosine 38) is a Sulfotyrosine. Position 47 is a phosphoserine (serine 47). The Inhibitor I9 domain maps to 77–149 (TYVVVLKEET…VDYIEEDSSV (73 aa)). In terms of domain architecture, Peptidase S8 spans 155–444 (PWNLERITPA…VLTPNLVAAL (290 aa)). Residues aspartate 186 and histidine 226 each act as charge relay system in the active site. Disulfide bonds link cysteine 223/cysteine 255 and cysteine 323/cysteine 358. The active-site Charge relay system is serine 386. The interval 450–692 (RAGWQLFCRT…HLVQASQELQ (243 aa)) is C-terminal domain. 3 cysteine pairs are disulfide-bonded: cysteine 457–cysteine 527, cysteine 477–cysteine 526, and cysteine 486–cysteine 509. A glycan (N-linked (GlcNAc...) asparagine) is linked at asparagine 533. 6 cysteine pairs are disulfide-bonded: cysteine 534–cysteine 601, cysteine 552–cysteine 600, cysteine 562–cysteine 588, cysteine 608–cysteine 679, cysteine 626–cysteine 678, and cysteine 635–cysteine 654. The residue at position 688 (serine 688) is a Phosphoserine.

Belongs to the peptidase S8 family. As to quaternary structure, monomer. Can self-associate to form dimers and higher multimers which may have increased LDLR degrading activity. The precursor protein but not the mature protein may form multimers. Interacts with APOB, VLDLR, LRP8/APOER2 and BACE1. The full-length immature form (pro-PCSK9) interacts with SCNN1A, SCNN1B and SCNN1G. The pro-PCSK9 form (via C-terminal domain) interacts with LDLR. Interacts (via the C-terminal domain) with ANXA2 (via repeat Annexin 1); the interaction inhibits the degradation of LDLR. Requires Ca(2+) as cofactor. Post-translationally, cleavage by furin and PCSK5 generates a truncated inactive protein that is unable to induce LDLR degradation. Undergoes autocatalytic cleavage in the endoplasmic reticulum to release the propeptide from the N-terminus and the cleavage of the propeptide is strictly required for its maturation and activation. The cleaved propeptide however remains associated with the catalytic domain through non-covalent interactions, preventing potential substrates from accessing its active site. As a result, it is secreted from cells as a propeptide-containing, enzymatically inactive protein. In terms of processing, phosphorylation protects the propeptide against proteolysis.

The protein localises to the cytoplasm. It localises to the secreted. Its subcellular location is the endosome. The protein resides in the lysosome. It is found in the cell surface. The protein localises to the endoplasmic reticulum. It localises to the golgi apparatus. Its proteolytic activity is autoinhibited by the non-covalent binding of the propeptide to the catalytic domain. Inhibited by EGTA. Crucial player in the regulation of plasma cholesterol homeostasis. Binds to low-density lipid receptor family members: low density lipoprotein receptor (LDLR), very low density lipoprotein receptor (VLDLR), apolipoprotein E receptor (LRP1/APOER) and apolipoprotein receptor 2 (LRP8/APOER2), and promotes their degradation in intracellular acidic compartments. Acts via a non-proteolytic mechanism to enhance the degradation of the hepatic LDLR through a clathrin LDLRAP1/ARH-mediated pathway. May prevent the recycling of LDLR from endosomes to the cell surface or direct it to lysosomes for degradation. Can induce ubiquitination of LDLR leading to its subsequent degradation. Inhibits intracellular degradation of APOB via the autophagosome/lysosome pathway in a LDLR-independent manner. Involved in the disposal of non-acetylated intermediates of BACE1 in the early secretory pathway. Inhibits epithelial Na(+) channel (ENaC)-mediated Na(+) absorption by reducing ENaC surface expression primarily by increasing its proteasomal degradation. Regulates neuronal apoptosis via modulation of LRP8/APOER2 levels and related anti-apoptotic signaling pathways. The protein is Proprotein convertase subtilisin/kexin type 9 (PCSK9) of Macaca mulatta (Rhesus macaque).